The sequence spans 203 residues: Small ribosomal subunit protein uS4 (203 aa).

An S4 RNA-binding domain is found at 92–164 (TRLDSVVYLL…LEENRIRNVP (73 aa)).

It belongs to the universal ribosomal protein uS4 family. As to quaternary structure, part of the 30S ribosomal subunit. Contacts protein S5. The interaction surface between S4 and S5 is involved in control of translational fidelity.

One of the primary rRNA binding proteins, it binds directly to 16S rRNA where it nucleates assembly of the body of the 30S subunit. In terms of biological role, with S5 and S12 plays an important role in translational accuracy. The protein is Small ribosomal subunit protein uS4 of Opitutus terrae (strain DSM 11246 / JCM 15787 / PB90-1).